The chain runs to 631 residues: tRNA uridine 5-carboxymethylaminomethyl modification enzyme MnmG (631 aa).

Residues 15–20 (GAGHAG), Ile127, and Ser182 each bind FAD. 276 to 290 (GPRYCPSIEDKIVRF) lines the NAD(+) pocket. FAD is bound at residue Gln373.

This sequence belongs to the MnmG family. As to quaternary structure, homodimer. Heterotetramer of two MnmE and two MnmG subunits. Requires FAD as cofactor.

Its subcellular location is the cytoplasm. Functionally, NAD-binding protein involved in the addition of a carboxymethylaminomethyl (cmnm) group at the wobble position (U34) of certain tRNAs, forming tRNA-cmnm(5)s(2)U34. This Streptococcus mutans serotype c (strain ATCC 700610 / UA159) protein is tRNA uridine 5-carboxymethylaminomethyl modification enzyme MnmG.